The sequence spans 184 residues: MANQIYLFSLICLSVLLCQSYTVSSFQKSLDLAKPCKRFVLHLHDIAYDGDNAANATSAAIVNPLGLGDFSFGKFVIMDDPVTMDQNYLSKPVARVQGFFCYHGKATYDAWIAWTVVFNSTQHKGAFTIMGENPFMEPTRDLPIVGGTGDFIMTRGIATLTTDHIDGSKYFRVKLDIKLYECYH.

The first 20 residues, 1–20 (MANQIYLFSLICLSVLLCQS), serve as a signal peptide directing secretion. Cys-36 and Cys-182 are disulfide-bonded. N-linked (GlcNAc...) asparagine glycans are attached at residues Asn-55 and Asn-119.

Belongs to the plant dirigent protein family. As to quaternary structure, homodimer.

Its subcellular location is the secreted. It localises to the extracellular space. It is found in the apoplast. Functionally, dirigent proteins impart stereoselectivity on the phenoxy radical-coupling reaction, yielding optically active lignans from two molecules of coniferyl alcohol in the biosynthesis of lignans, flavonolignans, and alkaloids and thus plays a central role in plant secondary metabolism. The sequence is that of Dirigent protein 14 (DIR14) from Arabidopsis thaliana (Mouse-ear cress).